The sequence spans 444 residues: 23S rRNA (uracil(1939)-C(5))-methyltransferase RlmD (444 aa).

A TRAM domain is found at 5–67 (RSRIDRTPFQ…RHFDEARTVE (63 aa)). Cys-80, Cys-86, Cys-89, and Cys-168 together coordinate [4Fe-4S] cluster. The S-adenosyl-L-methionine site is built by Gln-276, Phe-305, Asn-310, Glu-326, Asp-353, and Asp-374. The Nucleophile role is filled by Cys-400.

Belongs to the class I-like SAM-binding methyltransferase superfamily. RNA M5U methyltransferase family. RlmD subfamily.

It carries out the reaction uridine(1939) in 23S rRNA + S-adenosyl-L-methionine = 5-methyluridine(1939) in 23S rRNA + S-adenosyl-L-homocysteine + H(+). Catalyzes the formation of 5-methyl-uridine at position 1939 (m5U1939) in 23S rRNA. The chain is 23S rRNA (uracil(1939)-C(5))-methyltransferase RlmD from Stenotrophomonas maltophilia (strain K279a).